Here is a 228-residue protein sequence, read N- to C-terminus: Eukaryotic translation initiation factor 4E-2 (228 aa).

A disulfide bond links cysteine 130 and cysteine 134.

It belongs to the eukaryotic initiation factor 4E family. EIF4F is a multi-subunit complex, the composition of which varies with external and internal environmental conditions. It is composed of at least eIF4A, eIF4E and eIF4G. eIF4E is also known to interact with other partners. In terms of tissue distribution, highly expressed in all somatic tissues.

In terms of biological role, recognizes and binds the 7-methylguanosine-containing mRNA cap during an early step in the initiation of protein synthesis and facilitates ribosome binding by inducing the unwinding of the mRNAs secondary structures. All 5 eIF4E proteins bind monomethyl cap structures. Only ife-1, ife-2 and ife-5 bind trimethyl cap structures which result from trans-splicing. Translation of trimethyl cap structure mRNAs may be regulated by intracellular redox state; disulfide bonds change the width and depth of the cap-binding cavity determining selectivity to mRNA caps. Probably by regulating mRNA translation in somatic cells, negatively regulates lifespan independently of daf-2/insulin and let-363/TOR pathways. Negatively regulates resistance to oxidative stress. May play a role in embryonic development. The chain is Eukaryotic translation initiation factor 4E-2 (ife-2) from Caenorhabditis elegans.